A 110-amino-acid chain; its full sequence is Putative UPF0377 protein YIR040C (110 aa).

Belongs to the UPF0377 family.

This chain is Putative UPF0377 protein YIR040C, found in Saccharomyces cerevisiae (strain ATCC 204508 / S288c) (Baker's yeast).